Consider the following 406-residue polypeptide: 4-hydroxy-3-methylbut-2-en-1-yl diphosphate synthase (ferredoxin) (406 aa).

4 residues coordinate [4Fe-4S] cluster: Cys-313, Cys-316, Cys-347, and Glu-354.

The protein belongs to the IspG family. It depends on [4Fe-4S] cluster as a cofactor.

The enzyme catalyses (2E)-4-hydroxy-3-methylbut-2-enyl diphosphate + 2 oxidized [2Fe-2S]-[ferredoxin] + H2O = 2-C-methyl-D-erythritol 2,4-cyclic diphosphate + 2 reduced [2Fe-2S]-[ferredoxin] + H(+). It participates in isoprenoid biosynthesis; isopentenyl diphosphate biosynthesis via DXP pathway; isopentenyl diphosphate from 1-deoxy-D-xylulose 5-phosphate: step 5/6. Functionally, converts 2C-methyl-D-erythritol 2,4-cyclodiphosphate (ME-2,4cPP) into 1-hydroxy-2-methyl-2-(E)-butenyl 4-diphosphate. The protein is 4-hydroxy-3-methylbut-2-en-1-yl diphosphate synthase (ferredoxin) of Picosynechococcus sp. (strain ATCC 27264 / PCC 7002 / PR-6) (Agmenellum quadruplicatum).